Here is a 317-residue protein sequence, read N- to C-terminus: Zinc transporter ZIP3 (317 aa).

The Extracellular portion of the chain corresponds to M1–K3. Residues L4–L24 form a helical membrane-spanning segment. At L25–K42 the chain is on the cytoplasmic side. Residues V43–L63 form a helical membrane-spanning segment. Over L64 to P85 the chain is Extracellular. A helical membrane pass occupies residues L86–L106. Residues T107–R172 are Cytoplasmic-facing. A phosphoserine mark is found at S125 and S129. Residues L173–L193 traverse the membrane as a helical segment. Residues Q194 to R199 lie on the Extracellular side of the membrane. The chain crosses the membrane as a helical span at residues V200–I220. Residues S221–A232 lie on the Cytoplasmic side of the membrane. The helical transmembrane segment at A233–I253 threads the bilayer. Residues E254–S265 lie on the Extracellular side of the membrane. A helical membrane pass occupies residues A266 to A286. Topologically, residues K287 to E294 are cytoplasmic. The chain crosses the membrane as a helical span at residues Q295–L315. Residues K316–W317 lie on the Extracellular side of the membrane.

The protein belongs to the ZIP transporter (TC 2.A.5) family. Highly expressed in the testes. Highly expressed in dentate gyrus granule cells of the hippocampus. Expressed in the mammary gland.

The protein localises to the cell membrane. Its subcellular location is the apical cell membrane. The enzyme catalyses Zn(2+)(in) = Zn(2+)(out). In terms of biological role, transporter for the divalent cation Zn(2+). Mediates the influx of Zn(2+) into cells from extracellular space. Controls Zn(2+) accumulation into dentate gyrus granule cells in the hippocampus. Mediates Zn(2+) reuptake from the secreted milk within the alveolar lumen. The protein is Zinc transporter ZIP3 (Slc39a3) of Mus musculus (Mouse).